The chain runs to 470 residues: tRNA modification GTPase MnmE (470 aa).

Residues arginine 30, glutamate 92, and arginine 132 each coordinate (6S)-5-formyl-5,6,7,8-tetrahydrofolate. Residues glycine 227–glycine 393 enclose the TrmE-type G domain. Asparagine 237 is a K(+) binding site. GTP-binding positions include asparagine 237–serine 242, threonine 256–threonine 262, aspartate 281–glycine 284, and asparagine 342–aspartate 345. Mg(2+) is bound at residue serine 241. Residues threonine 256, leucine 258, and threonine 261 each coordinate K(+). Threonine 262 serves as a coordination point for Mg(2+). Lysine 470 lines the (6S)-5-formyl-5,6,7,8-tetrahydrofolate pocket.

This sequence belongs to the TRAFAC class TrmE-Era-EngA-EngB-Septin-like GTPase superfamily. TrmE GTPase family. In terms of assembly, homodimer. Heterotetramer of two MnmE and two MnmG subunits. Requires K(+) as cofactor.

The protein resides in the cytoplasm. Exhibits a very high intrinsic GTPase hydrolysis rate. Involved in the addition of a carboxymethylaminomethyl (cmnm) group at the wobble position (U34) of certain tRNAs, forming tRNA-cmnm(5)s(2)U34. This Prochlorococcus marinus (strain MIT 9313) protein is tRNA modification GTPase MnmE.